Consider the following 421-residue polypeptide: Putative aspartate aminotransferase, cytoplasmic 2 (421 aa).

An N6-(pyridoxal phosphate)lysine modification is found at Lys249.

It belongs to the class-I pyridoxal-phosphate-dependent aminotransferase family. Homodimer. Pyridoxal 5'-phosphate is required as a cofactor.

The protein resides in the cytoplasm. It catalyses the reaction L-aspartate + 2-oxoglutarate = oxaloacetate + L-glutamate. In Homo sapiens (Human), this protein is Putative aspartate aminotransferase, cytoplasmic 2 (GOT1L1).